The primary structure comprises 444 residues: Phosphoglucosamine mutase (444 aa).

Catalysis depends on S103, which acts as the Phosphoserine intermediate. Mg(2+) contacts are provided by S103, D242, D244, and D246. Position 103 is a phosphoserine (S103).

This sequence belongs to the phosphohexose mutase family. Mg(2+) is required as a cofactor. Post-translationally, activated by phosphorylation.

The enzyme catalyses alpha-D-glucosamine 1-phosphate = D-glucosamine 6-phosphate. Its function is as follows. Catalyzes the conversion of glucosamine-6-phosphate to glucosamine-1-phosphate. The polypeptide is Phosphoglucosamine mutase (Hydrogenovibrio crunogenus (strain DSM 25203 / XCL-2) (Thiomicrospira crunogena)).